Consider the following 134-residue polypeptide: Ion transport peptide-like (134 aa).

Cystine bridges form between Cys62-Cys98, Cys78-Cys94, and Cys81-Cys107.

Belongs to the arthropod CHH/MIH/GIH/VIH hormone family.

It localises to the secreted. In Schistocerca gregaria (Desert locust), this protein is Ion transport peptide-like.